Here is a 668-residue protein sequence, read N- to C-terminus: Nuclear pore complex protein Nup75 (668 aa).

Belongs to the nucleoporin Nup85 family. Component of the nuclear pore complex (NPC). Component of the NPC Nup107-160 subcomplex.

It localises to the nucleus. It is found in the nuclear pore complex. Its subcellular location is the nucleus membrane. Its function is as follows. Component of the nuclear pore complex (NPC) that seems to be required for NPC assembly and maintenance. Required for nuclear import of phosphorylated Mad via importin msk. Has no role in classical nuclear localization signal (cNLS)-dependent nuclear import via importin-beta. Facilitates the interaction between Nup93 and sec13 with msk. The polypeptide is Nuclear pore complex protein Nup75 (Drosophila melanogaster (Fruit fly)).